Reading from the N-terminus, the 122-residue chain is Basic phospholipase A2 LmTX-II (122 aa).

6 cysteine pairs are disulfide-bonded: Cys-26-Cys-115, Cys-28-Cys-44, Cys-43-Cys-95, Cys-49-Cys-122, Cys-50-Cys-88, and Cys-75-Cys-86. Ca(2+) is bound by residues Tyr-27, Gly-29, and Gly-31. The active site involves His-47. Asp-48 contacts Ca(2+). The active site involves Asp-89.

In terms of assembly, monomer. Requires Ca(2+) as cofactor. In terms of tissue distribution, expressed by the venom gland.

Its subcellular location is the secreted. The catalysed reaction is a 1,2-diacyl-sn-glycero-3-phosphocholine + H2O = a 1-acyl-sn-glycero-3-phosphocholine + a fatty acid + H(+). Its function is as follows. Snake venom phospholipase A2 (PLA2) that may display neurotoxic and myotoxic activities. May induce inflammatory edema by mechanisms involving mast cell activation and arachidonic acid metabolites. May increase plasma creatine kinase activity. PLA2 catalyzes the calcium-dependent hydrolysis of the 2-acyl groups in 3-sn-phosphoglycerides. The protein is Basic phospholipase A2 LmTX-II of Lachesis muta muta (Bushmaster).